The primary structure comprises 360 residues: Probable ribonucleoside-diphosphate reductase small subunit 376L (360 aa).

Positions 67, 98, and 101 each coordinate Fe cation. Tyr105 is a catalytic residue. The Fe cation site is built by Glu172, Glu206, and His209.

The protein belongs to the ribonucleoside diphosphate reductase small chain family. Heterotetramer composed of a homodimer of the large subunit (R1) and a homodimer of the small subunit (R2). Larger multisubunit protein complex are also active, composed of (R1)n(R2)n. It depends on Fe cation as a cofactor.

The enzyme catalyses a 2'-deoxyribonucleoside 5'-diphosphate + [thioredoxin]-disulfide + H2O = a ribonucleoside 5'-diphosphate + [thioredoxin]-dithiol. Functionally, ribonucleoside-diphosphate reductase holoenzyme provides the precursors necessary for viral DNA synthesis. Allows virus growth in non-dividing cells. Catalyzes the biosynthesis of deoxyribonucleotides from the corresponding ribonucleotides. The protein is Probable ribonucleoside-diphosphate reductase small subunit 376L of Acheta domesticus (House cricket).